Consider the following 94-residue polypeptide: Co-chaperonin GroES (94 aa).

The protein belongs to the GroES chaperonin family. In terms of assembly, heptamer of 7 subunits arranged in a ring. Interacts with the chaperonin GroEL.

The protein resides in the cytoplasm. Together with the chaperonin GroEL, plays an essential role in assisting protein folding. The GroEL-GroES system forms a nano-cage that allows encapsulation of the non-native substrate proteins and provides a physical environment optimized to promote and accelerate protein folding. GroES binds to the apical surface of the GroEL ring, thereby capping the opening of the GroEL channel. This chain is Co-chaperonin GroES, found in Lactobacillus delbrueckii subsp. bulgaricus (strain ATCC BAA-365 / Lb-18).